A 347-amino-acid polypeptide reads, in one-letter code: Circulating cathodic antigen (347 aa).

Positions Ile-76 to Ile-109 form a coiled coil. The tract at residues Pro-149 to Asp-177 is disordered. The segment covering Ser-153 to Gly-174 has biased composition (polar residues). A coiled-coil region spans residues Asp-206 to Ser-233. Residues Leu-303–Asp-332 are disordered. A compositionally biased stretch (low complexity) spans Pro-307–Ser-316.

This sequence belongs to the SIKE family. In terms of processing, O-glycosylated.

Its function is as follows. Involved in protection of the schistosome gut. This is Circulating cathodic antigen from Schistosoma mansoni (Blood fluke).